The sequence spans 889 residues: Potassium/sodium hyperpolarization-activated cyclic nucleotide-gated channel 2 (889 aa).

A compositionally biased stretch (gly residues) spans 1–10 (MDARGGGGRP). A disordered region spans residues 1 to 159 (MDARGGGGRP…GPAGEPRGSQ (159 aa)). At 1 to 215 (MDARGGGGRP…PYSDFRFYWD (215 aa)) the chain is on the cytoplasmic side. A compositionally biased stretch (pro residues) spans 17–55 (TPAPGPPPPPPPAPPQQQPPPPPPPAPPPGPGPAPPQHP). A compositionally biased stretch (low complexity) spans 129-155 (GAASGPAPGPGPAEEAGSEEAGPAGEP). Residues serine 146 and serine 161 each carry the phosphoserine modification. The tract at residues 158-209 (SQASFMQRQFGALLQPGVNKFSLRMFGSQKAVEREQERVKSAGAWIIHPYSD) is involved in subunit assembly. The helical transmembrane segment at 216–236 (FTMLLFMVGNLIIIPVGITFF) threads the bilayer. Residues 237 to 240 (KDET) lie on the Extracellular side of the membrane. Residues 241–261 (TAPWIVFNVVSDTFFLMDLVL) traverse the membrane as a helical segment. Residues 262–288 (NFRTGIVIEDNTEIILDPEKIKKKYLR) are Cytoplasmic-facing. A helical membrane pass occupies residues 289–309 (TWFVVDFVSSIPVDYIFLIVE). Over 310–317 (KGIDSEVY) the chain is Extracellular. The helical; Voltage-sensor transmembrane segment at 318-338 (KTARALRIVRFTKILSLLRLL) threads the bilayer. Topologically, residues 339 to 369 (RLSRLIRYIHQWEEIFHMTYDLASAVMRICN) are cytoplasmic. Residues 370-390 (LISMMLLLCHWDGCLQFLVPM) traverse the membrane as a helical segment. The Extracellular segment spans residues 391–413 (LQDFPRNCWVSINGMVNHSWSEL). A glycan (N-linked (GlcNAc...) asparagine) is linked at asparagine 407. The segment at residues 414-435 (YSFALFKAMSHMLCIGYGRQAP) is an intramembrane region (pore-forming). At 436–440 (ESMTD) the chain is on the extracellular side. A helical membrane pass occupies residues 441 to 461 (IWLTMLSMIVGATCYAMFIGH). Residues 462-889 (ATALIQSLDS…SARSRLSSNL (428 aa)) are Cytoplasmic-facing. 8 residues coordinate 3',5'-cyclic AMP: methionine 599, glycine 608, glutamate 609, isoleucine 610, cysteine 611, arginine 618, threonine 619, and arginine 659. Phosphoserine; by PKG/PRKG2 is present on serine 668. At serine 754 the chain carries Phosphoserine. The segment at 754–889 (SPRLVRRPPP…SARSRLSSNL (136 aa)) is disordered. The residue at position 756 (arginine 756) is an Omega-N-methylarginine. Positions 760 to 784 (RPPPGPAPAAASPGPPPPASPPGAP) are enriched in pro residues. A phosphoserine mark is found at serine 771, serine 779, serine 786, serine 866, and serine 868. Residues 785–860 (ASPRAPRTSP…TPAARAAAPS (76 aa)) are compositionally biased toward low complexity.

Belongs to the potassium channel HCN family. Homotetramer. The channel is composed of a homo- or heterotetrameric complex of pore-forming subunits. Heterotetramer with HCN1. Forms an obligate 4:4 complex with accessory subunit PEX5L. Interacts with KCNE2. In terms of processing, phosphorylation at Ser-668 by PRKG2 shifts the voltage-dependence to more negative voltages, hence counteracting the stimulatory effect of cGMP on gating. S-palmitoylated. Post-translationally, N-glycosylated; required for cell surface trafficking of HCN2. In terms of tissue distribution, highly expressed throughout the brain. Detected at low levels in heart.

It localises to the cell membrane. It catalyses the reaction Na(+)(in) = Na(+)(out). The enzyme catalyses K(+)(in) = K(+)(out). It carries out the reaction NH4(+)(in) = NH4(+)(out). Activated by cAMP, and at 10-100 times higher concentrations, also by cGMP. cAMP binding causes a conformation change that leads to the assembly of an active tetramer and channel opening. Binding of cAMP removes a tonic inhibition conferred by cyclic nucleotide-binding domain (CNBD) on channel opening. Channel activity is modulated by intracellular chloride ions and pH; acidic pH shifts the activation to more negative voltages. Inhibited by extracellular cesium ions. Functionally, hyperpolarization-activated ion channel that is permeable to sodium and potassium ions. Displays lower selectivity for K(+) over Na(+) ions. Contributes to the native pacemaker currents in heart (If) and in neurons (Ih). Can also transport ammonium in the distal nephron. Involved in the initiation of neuropathic pain in sensory neurons. The protein is Potassium/sodium hyperpolarization-activated cyclic nucleotide-gated channel 2 of Homo sapiens (Human).